A 1049-amino-acid chain; its full sequence is Dyslexia-associated protein KIAA0319-like protein (1049 aa).

The Cytoplasmic portion of the chain corresponds to 1-29 (MEKRLGVKPNPASWILSGYYWQTSAKWLR). The helical transmembrane segment at 30 to 50 (SLYLFYTCFCFSVLWLSTDAS) threads the bilayer. In terms of domain architecture, MANSC spans 49–127 (ASESRCQQGK…AFRTHSSNSM (79 aa)). The Extracellular segment spans residues 51–932 (ESRCQQGKTQ…DSNCEWSVLY (882 aa)). Asn247, Asn395, Asn472, Asn487, and Asn525 each carry an N-linked (GlcNAc...) asparagine glycan. 5 PKD domains span residues 312-401 (SAGE…VKPE), 409-498 (IAIV…VNKA), 504-594 (VANA…VQPE), 600-688 (QADA…VKEE), and 694-785 (IAKI…VKPD). A helical membrane pass occupies residues 933–953 (VIIATFVIVVALGILSWTVIC). Over 954-1049 (CCKRQKGKPK…KARSPREEIL (96 aa)) the chain is Cytoplasmic. The residue at position 974 (Thr974) is a Phosphothreonine. Ser978, Ser1009, and Ser1031 each carry phosphoserine. The tract at residues 1022–1049 (GKLLHGQNGSVPNGQTPLKARSPREEIL) is disordered. Residues 1028–1037 (QNGSVPNGQT) show a composition bias toward polar residues. Thr1037 bears the Phosphothreonine mark.

As to quaternary structure, interacts with RTN4R. (Microbial infection) Interacts with AAV-2 VP1. N-glycosylated. In terms of tissue distribution, expressed in cortical neurons in the brain cortex (at protein level).

Its subcellular location is the cytoplasmic granule membrane. The protein resides in the golgi apparatus membrane. It is found in the golgi apparatus. The protein localises to the trans-Golgi network membrane. It localises to the cell membrane. In terms of biological role, possible role in axon guidance through interaction with RTN4R. Its function is as follows. (Microbial infection) Acts as a receptor for adeno-associated virus and is involved in adeno-associated virus infection through endocytosis system. This Homo sapiens (Human) protein is Dyslexia-associated protein KIAA0319-like protein.